The chain runs to 256 residues: MDISYHEKISKTYELIKKSTYSVAFTGAGISTESGIPDFRSPNGLWQRFRIVTYQEFIIDRKARNEFWKMKRELIQEIINAKPNNAHNALAELEKRGLLKYVITQNIDGLHQMAGNKSVIELHGNQRGYICLDCEKVYPLEEVLKMLKEQELDLRCEVCGGIIKPTIVFFGEPMPEKELLMAQQIANKCDIMFVIGTSLQVEPAASIPRIAYQNGAKLIFINKVQTEWDWIAEIIFYDSAGKVLKDILDVIKSEKF.

In terms of domain architecture, Deacetylase sirtuin-type spans 1-254 (MDISYHEKIS…KDILDVIKSE (254 aa)). Positions 28, 32, 39, 40, 105, 107, 108, and 123 each coordinate NAD(+). Residue F39 coordinates nicotinamide. I107 and D108 together coordinate nicotinamide. H123 acts as the Proton acceptor in catalysis. Zn(2+) contacts are provided by C131, C134, C156, and C159. T197, S198, and N222 together coordinate NAD(+).

It belongs to the sirtuin family. Class U subfamily. Zn(2+) serves as cofactor.

The protein resides in the cytoplasm. The catalysed reaction is N(6)-acetyl-L-lysyl-[protein] + NAD(+) + H2O = 2''-O-acetyl-ADP-D-ribose + nicotinamide + L-lysyl-[protein]. Functionally, NAD-dependent protein deacetylase which modulates the activities of several enzymes which are inactive in their acetylated form. This Thermodesulfovibrio yellowstonii (strain ATCC 51303 / DSM 11347 / YP87) protein is NAD-dependent protein deacetylase.